The following is an 867-amino-acid chain: Cadherin-related family member 1 (867 aa).

The signal sequence occupies residues 1 to 21; the sequence is MGRGPPAVLAPWMLFLSLAQA. Over 22–701 the chain is Extracellular; it reads NFAPHFFDNG…LMQTKDNPMK (680 aa). Cadherin domains are found at residues 36 to 135, 136 to 247, 248 to 354, 360 to 473, 474 to 577, and 574 to 689; these read NGNM…APRF, IQEP…GPVF, VGTP…PPTF, PQNR…VPKF, TSHY…YPQF, and YPQF…SPMA. N-linked (GlcNAc...) asparagine glycosylation is found at Asn-58 and Asn-89. 2 N-linked (GlcNAc...) asparagine glycosylation sites follow: Asn-288 and Asn-297. Residues 702–722 traverse the membrane as a helical segment; it reads AVGVLAGIMAIIVAITVLIST. At 723 to 867 the chain is on the cytoplasmic side; sequence ATFWRNKKSN…KKNLHSKAYF (145 aa). Positions 767-843 are disordered; that stretch reads KFVLREAPPN…VAKRKAVGSP (77 aa). Residues 777–786 are compositionally biased toward polar residues; it reads ENCNNNSRGS. The span at 790–802 shows a compositional bias: pro residues; sequence PQAPAPPPPPSPA.

In terms of assembly, interacts with PROM1. Undergoes proteolytic cleavage; produces a soluble 95 kDa N-terminal fragment and a 25 kDa cell-associated C-terminal fragment. Expressed in photoreceptor cells of the outer nuclear layer of the retina.

The protein resides in the cell membrane. Its function is as follows. Potential calcium-dependent cell-adhesion protein. May be required for the structural integrity of the outer segment (OS) of photoreceptor cells. This is Cadherin-related family member 1 (CDHR1) from Bos taurus (Bovine).